Here is a 381-residue protein sequence, read N- to C-terminus: L-lactate dehydrogenase (381 aa).

The FMN hydroxy acid dehydrogenase domain maps to 1 to 380 (MIISASTDYR…TRDSLVRELG (380 aa)). Position 24 (Y24) interacts with substrate. 2 residues coordinate FMN: S106 and Q127. Position 129 (Y129) interacts with substrate. T155 serves as a coordination point for FMN. R164 lines the substrate pocket. Position 251 (K251) interacts with FMN. The active-site Proton acceptor is H275. Residue R278 participates in substrate binding. 306 to 330 (DSGIRSGLDVVRMIALGADTVLIGR) lines the FMN pocket.

It belongs to the FMN-dependent alpha-hydroxy acid dehydrogenase family. As to quaternary structure, homotetramer. It depends on FMN as a cofactor.

It is found in the cell inner membrane. It carries out the reaction (S)-lactate + A = pyruvate + AH2. Its function is as follows. Catalyzes the conversion of L-lactate to pyruvate. Is coupled to the respiratory chain. The sequence is that of L-lactate dehydrogenase from Pseudomonas putida (strain GB-1).